The chain runs to 2495 residues: Non-reducing polyketide synthase adrD (2495 aa).

The tract at residues 14–252 (VVFGPQSSEI…HHSRHVTAVQ (239 aa)) is N-terminal acylcarrier protein transacylase domain (SAT). One can recognise a Ketosynthase family 3 (KS3) domain in the interval 386-807 (VIPIAITGMG…GSNAALVVKQ (422 aa)). Catalysis depends on for beta-ketoacyl synthase activity residues cysteine 551, histidine 686, and histidine 725. The interval 913-1222 (LCFGGQNGNE…QALDLGGALA (310 aa)) is malonyl-CoA:ACP transacylase (MAT) domain. Residue serine 1000 is the For acyl/malonyl transferase activity of the active site. An N-terminal hotdog fold region spans residues 1294-1422 (KEFVQLLTKQ…GEISLHPFGQ (129 aa)). One can recognise a PKS/mFAS DH domain in the interval 1294–1601 (KEFVQLLTKQ…FTSVSIAGLS (308 aa)). The tract at residues 1295 to 1600 (EFVQLLTKQP…TFTSVSIAGL (306 aa)) is product template (PT) domain. Histidine 1325 acts as the Proton acceptor; for dehydratase activity in catalysis. A C-terminal hotdog fold region spans residues 1450–1601 (ESSGLKGFAV…FTSVSIAGLS (152 aa)). The Proton donor; for dehydratase activity role is filled by aspartate 1508. Residues 1651–1725 (SGHFMVVQEM…TLVQTIFPDA (75 aa)) form the Carrier domain. Position 1685 is an O-(pantetheine 4'-phosphoryl)serine (serine 1685). The tract at residues 1887 to 2120 (QHTSEHNLLR…GFQWVDWTYN (234 aa)) is methyltransferase (CMeT) domain. The tract at residues 2150-2495 (YLMNEETIVY…YEFLRDHVRY (346 aa)) is thioesterase (TE) domain. Catalysis depends on for thioesterase activity residues serine 2273 and aspartate 2432.

It catalyses the reaction 3 malonyl-CoA + acetyl-CoA + 2 S-adenosyl-L-methionine = 3,5-dimethylorsellinate + 2 S-adenosyl-L-homocysteine + 3 CO2 + 4 CoA. The protein operates within secondary metabolite biosynthesis; terpenoid biosynthesis. Non-reducing polyketide synthase; part of the gene cluster that mediates the biosynthesis of andrastins, meroterpenoid compounds that exhibit inhibitory activity against ras farnesyltransferase, suggesting that they could be promising leads for antitumor agents. The first step of the pathway is the synthesis of 3,5-dimethylorsellinic acid (DMOA) by the polyketide synthase adrD via condensation of one acetyl-CoA starter unit with 3 malonyl-CoA units and 2 methylations. DMAO is then converted to farnesyl-DMAO by the prenyltransferase adrG. The methyltransferase adrK catalyzes the methylation of the carboxyl group of farnesyl-DMAO to farnesyl-DMAO methyl ester which is further converted to epoxyfarnesyl-DMAO methyl ester by the FAD-dependent monooxygenase adrH. The terpene cyclase adrI then catalyzes the carbon skeletal rearrangement to generate the andrastin E, the first compound in the pathway having the andrastin scaffold, with the tetracyclic ring system. The post-cyclization tailoring enzymes adrF, adrE, adrJ, and adrA, are involved in the conversion of andrastin E into andrastin A. The short chain dehydrogenase adrF is responsible for the oxidation of the C-3 a hydroxyl group of andrastin E to yield the corresponding ketone, andrastin D. The ketoreductase adrE stereoselectively reduces the carbonyl moiety to reverse the stereochemistry of the C-3 position to yield andrastin F. The acetyltransferase adrJ is the acetyltransferase that attaches the acetyl group to the C-3 hydroxyl group of andrastin F to yield andrastin C. Finally, the cytochrome P450 monooxygenase adrA catalyzes two sequential oxidation reactions of the C-23 methyl group, to generate the corresponding alcohol andrastin B, and aldehyde andrastin A. The sequence is that of Non-reducing polyketide synthase adrD from Penicillium roqueforti.